The following is a 153-amino-acid chain: Transcription antitermination protein NusB (153 aa).

This sequence belongs to the NusB family.

Its function is as follows. Involved in transcription antitermination. Required for transcription of ribosomal RNA (rRNA) genes. Binds specifically to the boxA antiterminator sequence of the ribosomal RNA (rrn) operons. The sequence is that of Transcription antitermination protein NusB from Nitratidesulfovibrio vulgaris (strain ATCC 29579 / DSM 644 / CCUG 34227 / NCIMB 8303 / VKM B-1760 / Hildenborough) (Desulfovibrio vulgaris).